Reading from the N-terminus, the 336-residue chain is Phytochrome A-associated F-box protein (336 aa).

In terms of domain architecture, F-box spans 3–55 (ESVFSCIPEDVVFNIFFKLQDDPRNWARLACVCTKFSSIVRNVCCKTQCYSAI). The Nuclear localization signal motif lies at 197-201 (RKRRK).

Probable component of an E3 ubiquitin ligase SCF complex. Interacts with SKP1A/ASK1 and SKP1B/ASK2.

Its subcellular location is the nucleus. Its pathway is protein modification; protein ubiquitination. Functionally, component of SCF(ASK-cullin-F-box) E3 ubiquitin ligase complexes, which may mediate the ubiquitination and subsequent proteasomal degradation of target proteins. Negative regulator of the phyA signaling pathway that shifts the responsiveness of the phyA signaling system associated with hypocotyl elongation from red to far-red wavelength. The protein is Phytochrome A-associated F-box protein (EID1) of Arabidopsis thaliana (Mouse-ear cress).